We begin with the raw amino-acid sequence, 365 residues long: Medium chain reductase pydE (365 aa).

The region spanning 21 to 362 (KLIDSLPVPP…SKRARGKVLI (342 aa)) is the Enoyl reductase (ER) domain. NADP(+) contacts are provided by residues 185 to 188 (SGSV), Y226, 274 to 275 (IG), and 354 to 355 (KR).

Belongs to the zinc-containing alcohol dehydrogenase family. Monomer.

The protein operates within mycotoxin biosynthesis. In terms of biological role, medium chain reductase; part of the gene cluster that mediates the biosynthesis of pyrrocidines, fungal natural products containing a macrocyclic para-cyclophane connected to a decahydrofluorene ring system that show potent antibiotic activities toward Gram-negative bacteria. Within the pathway, pydE functions synergistically with pydB, pydX and pydZ to form the cyclophane. The pathway begins with the PKS-NRPS pydA which, with the help of the trans-enoyl reductase pydC, synthesizes the polyketide-tyrosyl acyl thioester product which can be reductively off-loaded by the terminal reductase (R) domain in pydA. The alpha/beta hydrolase pydG is then required to catalyze the subsequent Knoevenagel condensation that affords the 3-pyrrolin-2-one ring, whereas the four proteins pydB, pydE, pydX and pydZ then function synergistically to form the cyclophane. PydB and the membrane-bound pydX and pydZ are lipid-binding proteins that can sequester and mold the pdyG product into the inverse S-shape. Binding of the medium chain reductase pydE to the complex would trigger the cascade oxidative cyclization. PydY is involved in the Diels-Alder cycloaddition that forms the decahydrofluorene core. Additional non-enzymatic hydroxylation yields pyrrocidine A2 which can be further reduced into pyrrocidine B by an endogenous reductase. In Acremonium sp, this protein is Medium chain reductase pydE.